The chain runs to 381 residues: Cytosolic acyl coenzyme A thioester hydrolase (381 aa).

The HotDog ACOT-type 1 domain occupies 51 to 169; the sequence is PGHCIAMGRI…TLWYVPLSLK (119 aa). Residue asparagine 67 is part of the active site. 2 positions are modified to N6-acetyllysine: lysine 169 and lysine 199. The HotDog ACOT-type 2 domain occupies 225-339; it reads SYSQSSLIHL…FFTYVSLNQE (115 aa). Aspartate 256 is an active-site residue. N6-acetyllysine is present on lysine 284. The disordered stretch occupies residues 343-381; the sequence is LPVPQLVPETEDEKKRFEEGKGRYLQMKAKRQGHTEPQP. Basic and acidic residues predominate over residues 354–364; it reads DEKKRFEEGKG.

In terms of assembly, homohexamer. The N-terminus is blocked. As to expression, isoform 1 is expressed constitutively in brain and testis. Isoform 2 is induced in liver by treatment with the peroxisome proliferator.

The protein localises to the cytoplasm. It is found in the cytosol. The enzyme catalyses hexadecanoyl-CoA + H2O = hexadecanoate + CoA + H(+). It catalyses the reaction dodecanoyl-CoA + H2O = dodecanoate + CoA + H(+). The catalysed reaction is tetradecanoyl-CoA + H2O = tetradecanoate + CoA + H(+). It carries out the reaction decanoyl-CoA + H2O = decanoate + CoA + H(+). The enzyme catalyses octanoyl-CoA + H2O = octanoate + CoA + H(+). It catalyses the reaction octadecanoyl-CoA + H2O = octadecanoate + CoA + H(+). The catalysed reaction is (9Z)-octadecenoyl-CoA + H2O = (9Z)-octadecenoate + CoA + H(+). The protein operates within lipid metabolism; fatty acid metabolism. In terms of biological role, catalyzes the hydrolysis of acyl-CoAs into free fatty acids and coenzyme A (CoASH), regulating their respective intracellular levels. Preferentially hydrolyzes palmitoyl-CoA, but has a broad specificity acting on other fatty acyl-CoAs with chain-lengths of C8-C18. May play an important physiological function in brain. This is Cytosolic acyl coenzyme A thioester hydrolase (Acot7) from Rattus norvegicus (Rat).